Here is a 337-residue protein sequence, read N- to C-terminus: Mycothiol acetyltransferase (337 aa).

N-acetyltransferase domains follow at residues 11–151 (LDER…FELP) and 154–337 (VRLR…MYRK). E37 contributes to the 1D-myo-inositol 2-(L-cysteinylamino)-2-deoxy-alpha-D-glucopyranoside binding site. 81–83 (LVI) is a binding site for acetyl-CoA. E182 contributes to the 1D-myo-inositol 2-(L-cysteinylamino)-2-deoxy-alpha-D-glucopyranoside binding site. A disordered region spans residues 210-246 (RPTGSGDGDVADGGSTDGGPADSGSADGGAGEGGTGD). Residues 221-234 (DGGSTDGGPADSGS) show a composition bias toward low complexity. Residues 235-246 (ADGGAGEGGTGD) show a composition bias toward gly residues. 1D-myo-inositol 2-(L-cysteinylamino)-2-deoxy-alpha-D-glucopyranoside contacts are provided by K257 and E271. Residues 275–277 (VGV) and 282–288 (QGGGLGR) each bind acetyl-CoA. Residue Y309 coordinates 1D-myo-inositol 2-(L-cysteinylamino)-2-deoxy-alpha-D-glucopyranoside. Residue 314-319 (NTAAIR) coordinates acetyl-CoA.

The protein belongs to the acetyltransferase family. MshD subfamily. Monomer.

The catalysed reaction is 1D-myo-inositol 2-(L-cysteinylamino)-2-deoxy-alpha-D-glucopyranoside + acetyl-CoA = mycothiol + CoA + H(+). In terms of biological role, catalyzes the transfer of acetyl from acetyl-CoA to desacetylmycothiol (Cys-GlcN-Ins) to form mycothiol. In Streptosporangium roseum (strain ATCC 12428 / DSM 43021 / JCM 3005 / KCTC 9067 / NCIMB 10171 / NRRL 2505 / NI 9100), this protein is Mycothiol acetyltransferase.